Reading from the N-terminus, the 811-residue chain is Probable inorganic carbon transporter subunit DabA (811 aa).

4 residues coordinate Zn(2+): Cys336, Asp338, His498, and Cys513.

The protein belongs to the inorganic carbon transporter (TC 9.A.2) DabA family. Forms a complex with DabB. Zn(2+) serves as cofactor.

The protein localises to the cell inner membrane. Its function is as follows. Part of an energy-coupled inorganic carbon pump. This chain is Probable inorganic carbon transporter subunit DabA, found in Rhodospirillum centenum (strain ATCC 51521 / SW).